The sequence spans 87 residues: Putative defensin-like protein 238 (87 aa).

Residues 1–23 (MRSITWFIVFCVFMFIALNHVKG) form the signal peptide. 4 disulfide bridges follow: Cys30–Cys87, Cys40–Cys65, Cys48–Cys78, and Cys63–Cys80.

The protein belongs to the DEFL family.

The protein localises to the secreted. This Arabidopsis thaliana (Mouse-ear cress) protein is Putative defensin-like protein 238 (SCRL16).